The sequence spans 291 residues: Elongation factor Ts (291 aa).

The tract at residues 82-85 (TDFC) is involved in Mg(2+) ion dislocation from EF-Tu.

Belongs to the EF-Ts family.

The protein resides in the cytoplasm. Its function is as follows. Associates with the EF-Tu.GDP complex and induces the exchange of GDP to GTP. It remains bound to the aminoacyl-tRNA.EF-Tu.GTP complex up to the GTP hydrolysis stage on the ribosome. The polypeptide is Elongation factor Ts (Methylobacillus flagellatus (strain ATCC 51484 / DSM 6875 / VKM B-1610 / KT)).